Consider the following 147-residue polypeptide: Large ribosomal subunit protein uL15 (147 aa).

Basic residues predominate over residues 1–28 (MIRRRKKVRKLRGSHTHGWGCKKKHRGG). The segment at 1-43 (MIRRRKKVRKLRGSHTHGWGCKKKHRGGGSKGGRGMAGTGKRN) is disordered. Residues 29-38 (GSKGGRGMAG) are compositionally biased toward gly residues.

Belongs to the universal ribosomal protein uL15 family. In terms of assembly, part of the 50S ribosomal subunit.

Binds to the 23S rRNA. In Pyrococcus abyssi (strain GE5 / Orsay), this protein is Large ribosomal subunit protein uL15.